A 212-amino-acid chain; its full sequence is ATP-dependent dethiobiotin synthetase BioD (212 aa).

13-18 is a binding site for ATP; sequence GIGKTV. Threonine 17 contributes to the Mg(2+) binding site. Residue lysine 33 is part of the active site. Serine 37 provides a ligand contact to substrate. Glutamate 100 is a binding site for Mg(2+). ATP-binding positions include 100-103 and 184-186; these read EGAG and PLL.

It belongs to the dethiobiotin synthetase family. In terms of assembly, homodimer. Mg(2+) is required as a cofactor.

The protein localises to the cytoplasm. The enzyme catalyses (7R,8S)-7,8-diammoniononanoate + CO2 + ATP = (4R,5S)-dethiobiotin + ADP + phosphate + 3 H(+). It participates in cofactor biosynthesis; biotin biosynthesis; biotin from 7,8-diaminononanoate: step 1/2. Functionally, catalyzes a mechanistically unusual reaction, the ATP-dependent insertion of CO2 between the N7 and N8 nitrogen atoms of 7,8-diaminopelargonic acid (DAPA, also called 7,8-diammoniononanoate) to form a ureido ring. The protein is ATP-dependent dethiobiotin synthetase BioD of Brucella melitensis biotype 2 (strain ATCC 23457).